Reading from the N-terminus, the 283-residue chain is Protein-S-isoprenylcysteine O-methyltransferase (283 aa).

Over methionine 1–leucine 15 the chain is Cytoplasmic. Residues serine 16–leucine 32 form a helical membrane-spanning segment. Residues threonine 33–arginine 40 lie on the Lumenal side of the membrane. A helical transmembrane segment spans residues threonine 41–tyrosine 58. The Cytoplasmic segment spans residues arginine 59 to arginine 68. A helical membrane pass occupies residues alanine 69–glutamine 86. At serine 87–histidine 91 the chain is on the lumenal side. The helical transmembrane segment at phenylalanine 92 to alanine 111 threads the bilayer. Over valine 112–glutamate 130 the chain is Cytoplasmic. The chain crosses the membrane as a helical span at residues tyrosine 131–phenylalanine 148. Over tryptophan 149–lysine 153 the chain is Lumenal. A helical transmembrane segment spans residues glutamine 154–arginine 173. The Cytoplasmic portion of the chain corresponds to lysine 174–serine 211. Residues glutamine 189, histidine 196–valine 199, tyrosine 204, and histidine 209–tyrosine 212 contribute to the S-adenosyl-L-methionine site. The chain crosses the membrane as a helical span at residues tyrosine 212–cysteine 227. A topological domain (lumenal) is located at residue asparagine 228. Residues proline 229–phenylalanine 243 form a helical membrane-spanning segment. At arginine 244–leucine 283 the chain is on the cytoplasmic side. Arginine 246 lines the substrate pocket. S-adenosyl-L-methionine is bound at residue glutamate 250.

It belongs to the class VI-like SAM-binding methyltransferase superfamily. Isoprenylcysteine carboxyl methyltransferase family. Highly enriched in adult cerebellum, with a low level expression in other brain regions.

The protein resides in the endoplasmic reticulum membrane. The enzyme catalyses [protein]-C-terminal S-[(2E,6E)-farnesyl]-L-cysteine + S-adenosyl-L-methionine = [protein]-C-terminal S-[(2E,6E)-farnesyl]-L-cysteine methyl ester + S-adenosyl-L-homocysteine. In terms of biological role, catalyzes the post-translational methylation of isoprenylated C-terminal cysteine residues. The protein is Protein-S-isoprenylcysteine O-methyltransferase (Icmt) of Mus musculus (Mouse).